The primary structure comprises 400 residues: Tryptophan synthase beta chain (400 aa).

Lys92 carries the post-translational modification N6-(pyridoxal phosphate)lysine.

It belongs to the TrpB family. In terms of assembly, tetramer of two alpha and two beta chains. The cofactor is pyridoxal 5'-phosphate.

It carries out the reaction (1S,2R)-1-C-(indol-3-yl)glycerol 3-phosphate + L-serine = D-glyceraldehyde 3-phosphate + L-tryptophan + H2O. Its pathway is amino-acid biosynthesis; L-tryptophan biosynthesis; L-tryptophan from chorismate: step 5/5. In terms of biological role, the beta subunit is responsible for the synthesis of L-tryptophan from indole and L-serine. The polypeptide is Tryptophan synthase beta chain (Neisseria gonorrhoeae (strain NCCP11945)).